A 454-amino-acid chain; its full sequence is CCA-adding enzyme (454 aa).

The ATP site is built by serine 53 and lysine 56. CTP-binding residues include serine 53 and lysine 56. Residues aspartate 65, aspartate 67, and aspartate 119 each coordinate Mg(2+). The ATP site is built by histidine 142, lysine 161, and tyrosine 170. The CTP site is built by histidine 142, lysine 161, and tyrosine 170.

The protein belongs to the tRNA nucleotidyltransferase/poly(A) polymerase family. Archaeal CCA-adding enzyme subfamily. As to quaternary structure, homodimer. Mg(2+) serves as cofactor.

It carries out the reaction a tRNA precursor + 2 CTP + ATP = a tRNA with a 3' CCA end + 3 diphosphate. It catalyses the reaction a tRNA with a 3' CCA end + 2 CTP + ATP = a tRNA with a 3' CCACCA end + 3 diphosphate. Its function is as follows. Catalyzes the addition and repair of the essential 3'-terminal CCA sequence in tRNAs without using a nucleic acid template. Adds these three nucleotides in the order of C, C, and A to the tRNA nucleotide-73, using CTP and ATP as substrates and producing inorganic pyrophosphate. tRNA 3'-terminal CCA addition is required both for tRNA processing and repair. Also involved in tRNA surveillance by mediating tandem CCA addition to generate a CCACCA at the 3' terminus of unstable tRNAs. While stable tRNAs receive only 3'-terminal CCA, unstable tRNAs are marked with CCACCA and rapidly degraded. The polypeptide is CCA-adding enzyme (Thermococcus gammatolerans (strain DSM 15229 / JCM 11827 / EJ3)).